A 383-amino-acid chain; its full sequence is Corticosteroid-binding globulin (383 aa).

Asn74 and Asn154 each carry an N-linked (GlcNAc...) asparagine glycan. Residue Gln232 coordinates cortisol. N-linked (GlcNAc...) asparagine glycosylation occurs at Asn238. Gln264 is a cortisol binding site. An N-linked (GlcNAc...) asparagine glycan is attached at Asn308. Cortisol is bound at residue Trp371.

It belongs to the serpin family. As to expression, produced and secreted by hepatocytes, but has also been identified in a number of glycocorticoid responsive cells (it is found in maternal lung, spleen, and ovary and fetal kidney).

It localises to the secreted. Functionally, major transport protein for glucocorticoids and progestins in the blood of almost all vertebrate species. The polypeptide is Corticosteroid-binding globulin (SERPINA6) (Oryctolagus cuniculus (Rabbit)).